The primary structure comprises 741 residues: Transketolase, chloroplastic (741 aa).

Low complexity predominate over residues 1-19; that stretch reads MAASSSLSTLSHHQTLLSH. The disordered stretch occupies residues 1 to 33; it reads MAASSSLSTLSHHQTLLSHPKTHLPTTPASSLL. The transit peptide at 1 to 66 directs the protein to the chloroplast; the sequence is MAASSSLSTL…VGSASAVVRA (66 aa). A compositionally biased stretch (polar residues) spans 24-33; it reads LPTTPASSLL. Position 103 (histidine 103) interacts with substrate. Thiamine diphosphate-binding positions include histidine 143 and 192–194; that span reads GPL. Residue aspartate 233 participates in Mg(2+) binding. Positions 234 and 263 each coordinate thiamine diphosphate. Mg(2+)-binding residues include asparagine 263 and isoleucine 265. Residues histidine 340, arginine 434, and serine 461 each contribute to the substrate site. A thiamine diphosphate-binding site is contributed by histidine 340. Thiamine diphosphate-binding residues include glutamate 488 and phenylalanine 515. The active-site Proton donor is glutamate 488. The substrate site is built by histidine 539, aspartate 547, and arginine 598.

This sequence belongs to the transketolase family. In terms of assembly, homodimer. Mg(2+) serves as cofactor. Ca(2+) is required as a cofactor. Requires Mn(2+) as cofactor. It depends on Co(2+) as a cofactor. The cofactor is thiamine diphosphate.

It is found in the plastid. The protein resides in the chloroplast thylakoid membrane. It catalyses the reaction D-sedoheptulose 7-phosphate + D-glyceraldehyde 3-phosphate = aldehydo-D-ribose 5-phosphate + D-xylulose 5-phosphate. The protein operates within carbohydrate biosynthesis; Calvin cycle. Its function is as follows. Catalyzes the reversible transfer of a two-carbon ketol group from fructose-6-phosphate or sedoheptulose-7-phosphate to glyceraldehyde-3-phosphate to yield xylulose-5-phosphate and erythrose-4-phosphate or ribose-5-phosphate, respectively. This is Transketolase, chloroplastic from Spinacia oleracea (Spinach).